The following is a 460-amino-acid chain: V-type ATP synthase beta chain (460 aa).

Belongs to the ATPase alpha/beta chains family.

Functionally, produces ATP from ADP in the presence of a proton gradient across the membrane. The V-type beta chain is a regulatory subunit. This Anaeromyxobacter sp. (strain Fw109-5) protein is V-type ATP synthase beta chain.